A 276-amino-acid polypeptide reads, in one-letter code: MRITLNELLDLDYEGVARSIEEFIKGYVESSGAKGVVVGLSGGVDSTTTLYLLVRALGPERVLVLVMPDSDVTPEEDVHDAVGIAERLGVRYKLIDIKPIVASYLVAMGEAPDRRSKGNLRARVRMTLLYLYANMEGLLVAGTGDRSELLIGYFTKYGDGAVDFLPIGCLYKSQVRRLALHLGVPEKIALKPSSPRLWPGQLAEDELGMKYEEIDLILYALFDKGLSPEEAAKATGLPIEKVRRVLELHRASEHKRSLPPAPDPAATVWRFRRRKG.

Residue 39–46 (GLSGGVDS) participates in ATP binding. Asp45 provides a ligand contact to Mg(2+). Arg123 contributes to the deamido-NAD(+) binding site. Thr143 provides a ligand contact to ATP. Glu148 serves as a coordination point for Mg(2+). 2 residues coordinate deamido-NAD(+): Lys156 and Asp163. ATP contacts are provided by Lys172 and Ser194. Residue 254–255 (HK) participates in deamido-NAD(+) binding.

The protein belongs to the NAD synthetase family. In terms of assembly, homodimer.

The catalysed reaction is deamido-NAD(+) + NH4(+) + ATP = AMP + diphosphate + NAD(+) + H(+). It functions in the pathway cofactor biosynthesis; NAD(+) biosynthesis; NAD(+) from deamido-NAD(+) (ammonia route): step 1/1. Its function is as follows. Catalyzes the ATP-dependent amidation of deamido-NAD to form NAD. Uses ammonia as a nitrogen source. The protein is NH(3)-dependent NAD(+) synthetase of Hyperthermus butylicus (strain DSM 5456 / JCM 9403 / PLM1-5).